We begin with the raw amino-acid sequence, 473 residues long: Sphingosine kinase 1 (473 aa).

Positions 83 to 233 constitute a DAGKc domain; the sequence is QCRGNLLVFI…VALYSVKTDN (151 aa). ATP is bound by residues 93 to 95 and 125 to 129; these read NPN and TTGPN. 151–154 lines the substrate pocket; it reads SGDG. Residue Asp-153 is the Proton donor/acceptor of the active site. ATP contacts are provided by residues Glu-158 and 184 to 186; that span reads GSG. Asp-251 is a substrate binding site. Residues Arg-258, Arg-265, and 448-450 contribute to the ATP site; that span reads DGE.

The cofactor is Mg(2+). Expressed in the majority of cholinergic and GABAergic neurons, body wall muscle, excretory canal cells, intestine, and hypodermis.

The protein localises to the presynaptic cell membrane. It localises to the cell projection. The protein resides in the axon. It is found in the perikaryon. Its subcellular location is the mitochondrion membrane. The catalysed reaction is a sphingoid base + ATP = a sphingoid 1-phosphate + ADP + H(+). It carries out the reaction 15-methylhexadecasphing-4-enine + ATP = 15-methylhexadecasphing-4-enine 1-phosphate + ADP + H(+). It catalyses the reaction 15-methylhexadecasphinganine + ATP = 15-methylhexadecasphinganine 1-phosphate + ADP + H(+). It functions in the pathway lipid metabolism; sphingolipid metabolism. Catalyzes the phosphorylation of sphingoid bases to form sphingoid 1-phosphate (SPP), which have both intra- and extracellular functions. C.elegans contain specific sphingoid bases, which are unique or different in structure compared to the sphingoid bases found in other animals. Two examples of these distinctive compounds are: 15-methylhexadecasphinganine and 15-methylhexadecasphing-4-enine. Required for neurotransmitter release from neuromuscular junctions. Acts by recruiting the synaptic vesicle priming protein unc-13 to synapses. In Caenorhabditis elegans, this protein is Sphingosine kinase 1 (sphk-1).